The following is a 206-amino-acid chain: Small ribosomal subunit protein uS4c (206 aa).

In terms of domain architecture, S4 RNA-binding spans 93 to 161 (MRLDNIVYRL…IEKNIELLDK (69 aa)).

It belongs to the universal ribosomal protein uS4 family. Part of the 30S ribosomal subunit. Contacts protein S5. The interaction surface between S4 and S5 is involved in control of translational fidelity.

The protein localises to the plastid. One of the primary rRNA binding proteins, it binds directly to 16S rRNA where it nucleates assembly of the body of the 30S subunit. Its function is as follows. With S5 and S12 plays an important role in translational accuracy. The protein is Small ribosomal subunit protein uS4c (rps4) of Euglena longa (Euglenophycean alga).